Reading from the N-terminus, the 85-residue chain is SPbeta prophage-derived uncharacterized protein YoqG (85 aa).

This chain is SPbeta prophage-derived uncharacterized protein YoqG (yoqG), found in Bacillus subtilis (strain 168).